The following is a 221-amino-acid chain: Protein-L-isoaspartate O-methyltransferase (221 aa).

The active site involves Ser70.

The protein belongs to the methyltransferase superfamily. L-isoaspartyl/D-aspartyl protein methyltransferase family.

The protein resides in the cytoplasm. It catalyses the reaction [protein]-L-isoaspartate + S-adenosyl-L-methionine = [protein]-L-isoaspartate alpha-methyl ester + S-adenosyl-L-homocysteine. In terms of biological role, catalyzes the methyl esterification of L-isoaspartyl residues in peptides and proteins that result from spontaneous decomposition of normal L-aspartyl and L-asparaginyl residues. It plays a role in the repair and/or degradation of damaged proteins. The chain is Protein-L-isoaspartate O-methyltransferase from Alkalilimnicola ehrlichii (strain ATCC BAA-1101 / DSM 17681 / MLHE-1).